Consider the following 1582-residue polypeptide: MCERGFARRREEVTGLNRITEKGLKDICKRDKLYQTPRLNDVLYLHFQGYQCIENLDEYTELKSLWLESNAISEIQNLTKLTKLKCLYLQNNLITKMENLEFNRELDTLNLSQNHIRKIENIGTDILPVLNTLNITSNYLTDSASLAALVECKTLSVLDLSNNRIDDILIVKIFEQMPSLKVLVLQGNPVVSRLPQYRKTLILACKELTYLDSRPVFPRDRACAEAWKREGYEGERKEVQRWNRAERRKTRESVNSTIRMRNRHLKPEDQVPLLTSSDSEEEQKGISSAEKAQKRAEMEYGSVDTMWDEVSGESQASEHSTTSSTSAEDNESAGSQADHIAERISNRRVKPLEGRPKVLYDEAASGDEKAVTTTDSKKDSNAEDLPELKDITEALLQSDTASKPPLQPTLLQSDSGSEMDNTADLEQTCQTLLQVAQGNDDGDPTPKQIKSQMIDEMYESFGSDLFEEHPLPIDQLLNESTKKYQLEAKVCCEEETTKTPRDLYKEFIEEVTWRPKSKEQLEREQECVDASEKCAHDLAEMGSHLEEDLQELRDFTENLSSDVQEQAKDPSESDEEPTEEEMEVKSQLLKEQFQDRKKRLKEAIEERKTMQKNLEARKEDLNKSYNLFAKIMDDATDNVPKRVFGAGCDVPSKDWDKEECMQQLPLTSMEDSINGRPSSNDEDILTRPLTELTSAEAAEEICSQLDRKLAGEEEALRQLLCDLENENEILYSIETQIKYAESISVEDSQSQMVCASLLNDLISDVIYKDITEMGPNSYPLGPIESDEEYTYSEEPKLEKMVPPHLENPAGGKSLRECVDTFKEFFASKGNDKPRQESHTHLEKIRAAKALLKSKSLAEFSKDTPESLDAQLAKDEDRRKRHVAASAGRCFAKREKYDDTLEVVDNRLMVVKKDTGELEELPPPPELISDSESEKEVEEDDDAYDTAEETLQEYPRVPWTTPYKPKPRKAAEHLVNEAMQRVLAEQFSELPDDTKENEPQEDEFFSLEAKETFGNLDSEFFQKLDLDKVTTANNAEAATECMRSYNELKACMKSGSTELQLTSEENEMLQEMLSSNEDLEAKHKSNDDPLVERDNELLNKMMQRMKEHEERARELQEQLEKEKEEENSGPIKLSMGEGSMLYQRWSPLSLTEIIDPQAEEGGRQAEEGGAQQEEGGAQSEEGDDQAGVPQAEEGVTQGEESVLQEEETHAENGVAQAEGRVLQSPVIYPIIGYEDIDDDDAASDFTTDYSSDDEVAVVVPPKISPAMLKAYYYDGFEEDMRMVRENEARTRRGLRAIMQKEKQMWKDNEEEMAADMAPSASPKEEHIPEVKSETETAKPTVETAKDKWAKIASRLNEFLDPEAMEQLESHEFGESDGEDDVDLTGLQNYDEESETECESALKETTEIGDSEKQENKTQDETLDPKDTEAITDEWSPYQTSFEENRTAFCDRHNKLTMITEQTSDVGDPETETTKLICQWEKIIPEDSKIGDGPTEKFLDQKAQDNTENTDERPENPKNFITLDYFVDTEPSESLEDTEATETPEVSTEQTLKTEQMEFNLDVLNDDGDVVIKEVTVEAQVTYQ.

6 LRR repeats span residues 38 to 60, 61 to 82, 83 to 104, 105 to 126, 129 to 150, and 154 to 175; these read RLNDVLYLHFQGYQCIENLDEYT, ELKSLWLESNAISEIQNLTKLT, KLKCLYLQNNLITKMENLEFNR, ELDTLNLSQNHIRKIENIGTDI, VLNTLNITSNYLTDSASLAALV, and TLSVLDLSNNRIDDILIVKIFE. An LRRCT domain is found at 189-227; it reads PVVSRLPQYRKTLILACKELTYLDSRPVFPRDRACAEAW. Disordered regions lie at residues 245–420, 560–587, 859–878, 913–942, 1073–1092, 1101–1137, 1150–1218, 1305–1345, 1358–1438, 1484–1517, and 1529–1548; these read AERR…SEMD, SSDVQEQAKDPSESDEEPTEEEMEVKSQ, FSKDTPESLDAQLAKDEDRR, DTGELEELPPPPELISDSESEKEVEEDDDA, SSNEDLEAKHKSNDDPLVER, MQRMKEHEERARELQEQLEKEKEEENSGPIKLSMGEG, TEII…QAEG, KDNE…TAKD, LDPE…PYQT, EDSKIGDGPTEKFLDQKAQDNTENTDERPENPKN, and PSESLEDTEATETPEVSTEQ. The segment covering 313–327 has biased composition (low complexity); it reads ESQASEHSTTSSTSA. Positions 339 to 392 are enriched in basic and acidic residues; the sequence is HIAERISNRRVKPLEGRPKVLYDEAASGDEKAVTTTDSKKDSNAEDLPELKDIT. The span at 409 to 420 shows a compositional bias: polar residues; sequence TLLQSDSGSEMD. Positions 572 to 582 are enriched in acidic residues; the sequence is ESDEEPTEEEM. Over residues 928–942 the composition is skewed to acidic residues; sequence SDSESEKEVEEDDDA. Composition is skewed to basic and acidic residues over residues 1078–1092 and 1103–1125; these read LEAKHKSNDDPLVER and RMKEHEERARELQEQLEKEKEEE. The segment covering 1166-1178 has biased composition (low complexity); it reads EGGAQQEEGGAQS. Basic and acidic residues-rich tracts occupy residues 1321 to 1335, 1398 to 1427, and 1484 to 1514; these read PKEEHIPEVKSETET, SALKETTEIGDSEKQENKTQDETLDPKDTE, and EDSKIGDGPTEKFLDQKAQDNTENTDERPEN. Residues 1529 to 1540 show a composition bias toward acidic residues; sequence PSESLEDTEATE.

Belongs to the DNAAF1 family.

The protein localises to the cell projection. It is found in the cilium. Its function is as follows. Cilium-specific protein required for cilia structures. The polypeptide is Dynein axonemal assembly factor 1 homolog (dtr) (Drosophila pseudoobscura pseudoobscura (Fruit fly)).